The chain runs to 309 residues: DNA-directed RNA polymerase subunit alpha (309 aa).

Positions 1 to 225 are alpha N-terminal domain (alpha-NTD); that stretch reads MFQVQCLESA…SLFKLVNSAD (225 aa). The interval 237–309 is alpha C-terminal domain (alpha-CTD); sequence IVQVSQTDVT…LHERFNLTLN (73 aa).

The protein belongs to the RNA polymerase alpha chain family. In plastids the minimal PEP RNA polymerase catalytic core is composed of four subunits: alpha, beta, beta', and beta''. When a (nuclear-encoded) sigma factor is associated with the core the holoenzyme is formed, which can initiate transcription.

Its subcellular location is the plastid. It is found in the chloroplast. It catalyses the reaction RNA(n) + a ribonucleoside 5'-triphosphate = RNA(n+1) + diphosphate. In terms of biological role, DNA-dependent RNA polymerase catalyzes the transcription of DNA into RNA using the four ribonucleoside triphosphates as substrates. In Emiliania huxleyi (Coccolithophore), this protein is DNA-directed RNA polymerase subunit alpha.